We begin with the raw amino-acid sequence, 853 residues long: Dynein axonemal assembly factor 5 (853 aa).

Ala-2 carries the post-translational modification N-acetylalanine. HEAT repeat units follow at residues Gly-69 to Arg-107, His-200 to Gly-238, Ser-240 to Asp-276, Tyr-278 to Gln-316, Arg-374 to Lys-412, Gly-597 to Asp-636, Gln-694 to Asp-732, Pro-736 to Ser-774, and Gln-782 to Asp-820.

It belongs to the DNAAF5 family. As to quaternary structure, interacts with DNAI2; probably involved in outer arm dynein assembly. As to expression, expressed in ciliated cells including ependymal cells lining the lateral ventricles and multiciliated epithelium of oviduct ampulla.

It localises to the cytoplasm. The protein resides in the cytoplasmic granule. Its function is as follows. Cytoplasmic protein involved in the delivery of the dynein machinery to the motile cilium. It is required for the assembly of the axonemal dynein inner and outer arms, two structures attached to the peripheral outer doublet A microtubule of the axoneme, that play a crucial role in cilium motility. This is Dynein axonemal assembly factor 5 from Mus musculus (Mouse).